A 602-amino-acid chain; its full sequence is DNA ligase (602 aa).

An ATP-binding site is contributed by Glu262. Lys264 serves as the catalytic N6-AMP-lysine intermediate. Arg269, Arg284, Glu314, Phe354, Arg431, and Lys437 together coordinate ATP.

Belongs to the ATP-dependent DNA ligase family. In terms of assembly, monomer. Mg(2+) is required as a cofactor. Mn(2+) serves as cofactor.

It carries out the reaction ATP + (deoxyribonucleotide)n-3'-hydroxyl + 5'-phospho-(deoxyribonucleotide)m = (deoxyribonucleotide)n+m + AMP + diphosphate.. The enzyme catalyses ADP + (deoxyribonucleotide)n-3'-hydroxyl + 5'-phospho-(deoxyribonucleotide)m = (deoxyribonucleotide)n+m + AMP + phosphate.. It catalyses the reaction GTP + (deoxyribonucleotide)n-3'-hydroxyl + 5'-phospho-(deoxyribonucleotide)m = (deoxyribonucleotide)n+m + GMP + diphosphate.. With respect to regulation, inhibited in the presence of 100 mM KCl, NaCl or NH(4)Cl. Functionally, DNA ligase that seals nicks in double-stranded DNA during DNA replication, DNA recombination and DNA repair. Can also use ADP, but not NAD(+). In Aeropyrum pernix (strain ATCC 700893 / DSM 11879 / JCM 9820 / NBRC 100138 / K1), this protein is DNA ligase.